The following is a 113-amino-acid chain: Tyrosine-protein phosphatase 15 (113 aa).

Residues tryptophan 1 to isoleucine 113 enclose the Tyrosine-protein phosphatase domain.

This sequence belongs to the protein-tyrosine phosphatase family.

The catalysed reaction is O-phospho-L-tyrosyl-[protein] + H2O = L-tyrosyl-[protein] + phosphate. In Styela plicata (Wrinkled sea squirt), this protein is Tyrosine-protein phosphatase 15 (STY-15).